The chain runs to 348 residues: Phosphoribosylformylglycinamidine cyclo-ligase (348 aa).

It belongs to the AIR synthase family.

It is found in the cytoplasm. The enzyme catalyses 2-formamido-N(1)-(5-O-phospho-beta-D-ribosyl)acetamidine + ATP = 5-amino-1-(5-phospho-beta-D-ribosyl)imidazole + ADP + phosphate + H(+). It participates in purine metabolism; IMP biosynthesis via de novo pathway; 5-amino-1-(5-phospho-D-ribosyl)imidazole from N(2)-formyl-N(1)-(5-phospho-D-ribosyl)glycinamide: step 2/2. The sequence is that of Phosphoribosylformylglycinamidine cyclo-ligase from Ruegeria pomeroyi (strain ATCC 700808 / DSM 15171 / DSS-3) (Silicibacter pomeroyi).